Consider the following 563-residue polypeptide: Arginine--tRNA ligase (563 aa).

A 'HIGH' region motif is present at residues 121 to 131 (PNIAKPFSIGH).

This sequence belongs to the class-I aminoacyl-tRNA synthetase family. In terms of assembly, monomer.

Its subcellular location is the cytoplasm. It catalyses the reaction tRNA(Arg) + L-arginine + ATP = L-arginyl-tRNA(Arg) + AMP + diphosphate. This Streptococcus pneumoniae (strain Taiwan19F-14) protein is Arginine--tRNA ligase.